A 338-amino-acid polypeptide reads, in one-letter code: tRNA N6-adenosine threonylcarbamoyltransferase (338 aa).

Positions 109 and 113 each coordinate Fe cation. Residues 132-136 (AISGA), Asp-165, Gly-178, and Asn-277 contribute to the substrate site. Asp-302 contributes to the Fe cation binding site.

It belongs to the KAE1 / TsaD family. It depends on Fe(2+) as a cofactor.

It localises to the cytoplasm. It catalyses the reaction L-threonylcarbamoyladenylate + adenosine(37) in tRNA = N(6)-L-threonylcarbamoyladenosine(37) in tRNA + AMP + H(+). Its function is as follows. Required for the formation of a threonylcarbamoyl group on adenosine at position 37 (t(6)A37) in tRNAs that read codons beginning with adenine. Is involved in the transfer of the threonylcarbamoyl moiety of threonylcarbamoyl-AMP (TC-AMP) to the N6 group of A37, together with TsaE and TsaB. TsaD likely plays a direct catalytic role in this reaction. This is tRNA N6-adenosine threonylcarbamoyltransferase from Chlamydia trachomatis serovar L2b (strain UCH-1/proctitis).